We begin with the raw amino-acid sequence, 82 residues long: MSGSTGERPFSDIVTSIRYWVIHSVTIPSLFIAGWLFVSTGLAYDVFGTPRPNEYFTEERQELPLISDRYGALAQLDDLVPN.

Residues 21 to 35 (VIHSVTIPSLFIAGW) traverse the membrane as a helical segment. Position 23 (His-23) interacts with heme.

Belongs to the PsbE/PsbF family. In terms of assembly, heterodimer of an alpha subunit and a beta subunit. PSII is composed of 1 copy each of membrane proteins PsbA, PsbB, PsbC, PsbD, PsbE, PsbF, PsbH, PsbI, PsbJ, PsbK, PsbL, PsbM, PsbT, PsbX, PsbY, PsbZ, Psb30/Ycf12, at least 3 peripheral proteins of the oxygen-evolving complex and a large number of cofactors. It forms dimeric complexes. It depends on heme b as a cofactor.

It localises to the plastid. Its subcellular location is the chloroplast thylakoid membrane. Functionally, this b-type cytochrome is tightly associated with the reaction center of photosystem II (PSII). PSII is a light-driven water:plastoquinone oxidoreductase that uses light energy to abstract electrons from H(2)O, generating O(2) and a proton gradient subsequently used for ATP formation. It consists of a core antenna complex that captures photons, and an electron transfer chain that converts photonic excitation into a charge separation. The chain is Cytochrome b559 subunit alpha from Ostreococcus tauri.